Consider the following 461-residue polypeptide: Argininosuccinate lyase (461 aa).

The protein belongs to the lyase 1 family. Argininosuccinate lyase subfamily.

The protein resides in the cytoplasm. It carries out the reaction 2-(N(omega)-L-arginino)succinate = fumarate + L-arginine. It functions in the pathway amino-acid biosynthesis; L-arginine biosynthesis; L-arginine from L-ornithine and carbamoyl phosphate: step 3/3. The chain is Argininosuccinate lyase from Trichormus variabilis (strain ATCC 29413 / PCC 7937) (Anabaena variabilis).